The following is a 585-amino-acid chain: Arginine--tRNA ligase (585 aa).

The short motif at 126–136 (PNIAKEMHVGH) is the 'HIGH' region element.

Belongs to the class-I aminoacyl-tRNA synthetase family. In terms of assembly, monomer.

It is found in the cytoplasm. The enzyme catalyses tRNA(Arg) + L-arginine + ATP = L-arginyl-tRNA(Arg) + AMP + diphosphate. The polypeptide is Arginine--tRNA ligase (Rippkaea orientalis (strain PCC 8801 / RF-1) (Cyanothece sp. (strain PCC 8801))).